A 379-amino-acid polypeptide reads, in one-letter code: Lipoyl synthase 1, mitochondrial (379 aa).

Positions 106, 111, 117, 137, 141, 144, and 352 each coordinate [4Fe-4S] cluster. A Radical SAM core domain is found at Glu-122 to Leu-341.

This sequence belongs to the radical SAM superfamily. Lipoyl synthase family. [4Fe-4S] cluster serves as cofactor.

It localises to the mitochondrion. It catalyses the reaction [[Fe-S] cluster scaffold protein carrying a second [4Fe-4S](2+) cluster] + N(6)-octanoyl-L-lysyl-[protein] + 2 oxidized [2Fe-2S]-[ferredoxin] + 2 S-adenosyl-L-methionine + 4 H(+) = [[Fe-S] cluster scaffold protein] + N(6)-[(R)-dihydrolipoyl]-L-lysyl-[protein] + 4 Fe(3+) + 2 hydrogen sulfide + 2 5'-deoxyadenosine + 2 L-methionine + 2 reduced [2Fe-2S]-[ferredoxin]. Its pathway is protein modification; protein lipoylation via endogenous pathway; protein N(6)-(lipoyl)lysine from octanoyl-[acyl-carrier-protein]: step 2/2. Its function is as follows. Catalyzes the radical-mediated insertion of two sulfur atoms into the C-6 and C-8 positions of the octanoyl moiety bound to the lipoyl domains of lipoate-dependent enzymes, thereby converting the octanoylated domains into lipoylated derivatives. In Drosophila yakuba (Fruit fly), this protein is Lipoyl synthase 1, mitochondrial.